The sequence spans 439 residues: Homogentisate 1,2-dioxygenase (439 aa).

Catalysis depends on H289, which acts as the Proton acceptor. The Fe cation site is built by H332 and E338. The homogentisate site is built by Y347 and H368. A Fe cation-binding site is contributed by H368.

Belongs to the homogentisate dioxygenase family. Hexamer; dimer of trimers. Requires Fe cation as cofactor.

It carries out the reaction homogentisate + O2 = 4-maleylacetoacetate + H(+). It functions in the pathway amino-acid degradation; L-phenylalanine degradation; acetoacetate and fumarate from L-phenylalanine: step 4/6. Functionally, involved in the catabolism of homogentisate (2,5-dihydroxyphenylacetate or 2,5-OH-PhAc), a central intermediate in the degradation of phenylalanine and tyrosine. Catalyzes the oxidative ring cleavage of the aromatic ring of homogentisate to yield maleylacetoacetate. The chain is Homogentisate 1,2-dioxygenase from Xanthomonas euvesicatoria pv. vesicatoria (strain 85-10) (Xanthomonas campestris pv. vesicatoria).